The sequence spans 519 residues: Importin subunit alpha-5 (519 aa).

Residues 1–58 (MSLRPSTKTEIRRIRYKVSVDAEEGRRRREDFLVEIRKSKRNENLMKKRRVKVLPPDY) form the IBB domain. ARM repeat units lie at residues 103 to 143 (SPPT…NIAS), 146 to 185 (SEHT…NVAG), 188 to 228 (IQCR…NFFR), 230 to 269 (KPSP…NLSD), 272 to 311 (NENI…NIVS), 314 to 354 (SQQT…NITA), 357 to 396 (EEQI…NASV), and 400 to 439 (PNQI…MILI).

This sequence belongs to the importin alpha family. As to quaternary structure, forms a complex with importin subunit beta-1.

The protein resides in the nucleus envelope. Functionally, binds to conventional NLS motifs and mediates nuclear protein import across the nuclear envelope. This Arabidopsis thaliana (Mouse-ear cress) protein is Importin subunit alpha-5.